A 427-amino-acid chain; its full sequence is Glutamate-1-semialdehyde 2,1-aminomutase (427 aa).

Lysine 268 carries the N6-(pyridoxal phosphate)lysine modification.

It belongs to the class-III pyridoxal-phosphate-dependent aminotransferase family. HemL subfamily. Pyridoxal 5'-phosphate is required as a cofactor.

Its subcellular location is the cytoplasm. It carries out the reaction (S)-4-amino-5-oxopentanoate = 5-aminolevulinate. The protein operates within porphyrin-containing compound metabolism; protoporphyrin-IX biosynthesis; 5-aminolevulinate from L-glutamyl-tRNA(Glu): step 2/2. In Methanococcus maripaludis (strain C7 / ATCC BAA-1331), this protein is Glutamate-1-semialdehyde 2,1-aminomutase.